Here is a 732-residue protein sequence, read N- to C-terminus: Elongation factor 2 (732 aa).

Positions Glu19 to Leu260 constitute a tr-type G domain. GTP-binding positions include Ala28 to Thr35, Asp94 to His98, and Asn148 to Asp151. Position 597 is a diphthamide (His597).

This sequence belongs to the TRAFAC class translation factor GTPase superfamily. Classic translation factor GTPase family. EF-G/EF-2 subfamily.

It is found in the cytoplasm. Its function is as follows. Catalyzes the GTP-dependent ribosomal translocation step during translation elongation. During this step, the ribosome changes from the pre-translocational (PRE) to the post-translocational (POST) state as the newly formed A-site-bound peptidyl-tRNA and P-site-bound deacylated tRNA move to the P and E sites, respectively. Catalyzes the coordinated movement of the two tRNA molecules, the mRNA and conformational changes in the ribosome. This is Elongation factor 2 from Thermococcus kodakarensis (strain ATCC BAA-918 / JCM 12380 / KOD1) (Pyrococcus kodakaraensis (strain KOD1)).